The following is a 166-amino-acid chain: Spiderine-1a (166 aa).

The N-terminal stretch at 1-18 (MKFALVLLGVCAFYLVNA) is a signal peptide. A propeptide spanning residues 19-58 (TGDLETELEASELQELQEALDLIGETPLESLEAEELEEAR) is cleaved from the precursor. The segment at 59-99 (KFKWGKLFSTAKKLYKKGKKLSKNKNFKKALKFGKQLAKNL) is linear cationic cytotoxin domain. In terms of domain architecture, Oxytoxin-type inhibitor cystine knot (ICK) spans 113–166 (NNKCWAIGTTCSDDCDCCPEHHCHCPAGKWLPGLFRCTCQVTESDKVNKCPPAE). Intrachain disulfides connect Cys116–Cys130, Cys123–Cys135, Cys127–Cys162, Cys129–Cys151, and Cys137–Cys149.

Belongs to the spiderine family. Cationic/spiderine subfamily. Expressed by the venom gland.

It is found in the secreted. Its function is as follows. Has antimicrobial, insecticidal, cytolytic and cytotoxic activity. Active against E.coli DH5alpha, E.faecalis VKM B 871, B.subtilis VKM B 501, A.globiformis VKM Ac 1112, P.aeruginosa PAO1 and S.aureus 209P in submicromolar or low micromolar ranges. Lyses human erythrocytes. Kills HeLA and A549 cells. The polypeptide is Spiderine-1a (Oxyopes takobius (Lynx spider)).